The sequence spans 290 residues: Inner membrane protein YebZ (290 aa).

Residues 1–10 (MLAFTWIALR) lie on the Periplasmic side of the membrane. Residues 11 to 31 (FIHFTSLMLVFGFAMYGAWLA) traverse the membrane as a helical segment. The Cytoplasmic segment spans residues 32–49 (PLTIRRLLAKRFLRLQQH). A helical membrane pass occupies residues 50 to 70 (AAVWSLISATAMLAVQGGLMG). The Periplasmic portion of the chain corresponds to 71–89 (TGWTDVFSPNIWQAVLQTQ). The chain crosses the membrane as a helical span at residues 90 to 110 (FGGIWLWQIVLALVTLIVALM). At 111 to 117 (QPRNMPR) the chain is on the cytoplasmic side. The chain crosses the membrane as a helical span at residues 118–138 (LLFMLTTAQFILLAGVGHATL). The Periplasmic portion of the chain corresponds to 139 to 151 (NEGVTAKIHQTNH). A helical membrane pass occupies residues 152 to 172 (AIHLICAAAWFGGLLPVLWCM). Topologically, residues 173–195 (QLIKGRWRHQAIQALMRFSWCGH) are cytoplasmic. A helical transmembrane segment spans residues 196-216 (FAVIGVLASGVLNALLITGFP). Residues 217 to 222 (PTLTTY) are Periplasmic-facing. A helical membrane pass occupies residues 223 to 243 (WGQLLLLKAILVMIMVVIALA). Residues 244 to 260 (NRYVLVPRMRQDEDRAA) lie on the Cytoplasmic side of the membrane. The helical transmembrane segment at 261–281 (PWFVWMTKLEWAIGAVVLVII) threads the bilayer. Over 282–290 (SLLATLEPF) the chain is Periplasmic.

It belongs to the CopD family.

It localises to the cell inner membrane. In Escherichia coli (strain K12), this protein is Inner membrane protein YebZ (yebZ).